We begin with the raw amino-acid sequence, 400 residues long: 1-deoxy-D-xylulose 5-phosphate reductoisomerase (400 aa).

Residues Thr17, Gly18, Ser19, Ile20, and Asn131 each contribute to the NADPH site. A 1-deoxy-D-xylulose 5-phosphate-binding site is contributed by Lys132. NADPH is bound at residue Glu133. Mn(2+) is bound at residue Asp157. 1-deoxy-D-xylulose 5-phosphate-binding residues include Ser158, Glu159, Ser188, and His211. Glu159 contacts Mn(2+). Gly217 is a binding site for NADPH. Residues Ser224, Asn229, Lys230, and Glu233 each coordinate 1-deoxy-D-xylulose 5-phosphate. Residue Glu233 coordinates Mn(2+).

Belongs to the DXR family. The cofactor is Mg(2+). Mn(2+) is required as a cofactor.

It catalyses the reaction 2-C-methyl-D-erythritol 4-phosphate + NADP(+) = 1-deoxy-D-xylulose 5-phosphate + NADPH + H(+). It participates in isoprenoid biosynthesis; isopentenyl diphosphate biosynthesis via DXP pathway; isopentenyl diphosphate from 1-deoxy-D-xylulose 5-phosphate: step 1/6. Functionally, catalyzes the NADPH-dependent rearrangement and reduction of 1-deoxy-D-xylulose-5-phosphate (DXP) to 2-C-methyl-D-erythritol 4-phosphate (MEP). This chain is 1-deoxy-D-xylulose 5-phosphate reductoisomerase, found in Pseudomonas putida (strain ATCC 47054 / DSM 6125 / CFBP 8728 / NCIMB 11950 / KT2440).